A 210-amino-acid polypeptide reads, in one-letter code: Uracil phosphoribosyltransferase (210 aa).

5-phospho-alpha-D-ribose 1-diphosphate-binding positions include arginine 78, arginine 103, and 130-138; that span reads DPMLATGGS. Residues isoleucine 193 and 198-200 contribute to the uracil site; that span reads GDA. Aspartate 199 provides a ligand contact to 5-phospho-alpha-D-ribose 1-diphosphate.

This sequence belongs to the UPRTase family. It depends on Mg(2+) as a cofactor.

The catalysed reaction is UMP + diphosphate = 5-phospho-alpha-D-ribose 1-diphosphate + uracil. It participates in pyrimidine metabolism; UMP biosynthesis via salvage pathway; UMP from uracil: step 1/1. Its activity is regulated as follows. Allosterically activated by GTP. In terms of biological role, catalyzes the conversion of uracil and 5-phospho-alpha-D-ribose 1-diphosphate (PRPP) to UMP and diphosphate. This Chromobacterium violaceum (strain ATCC 12472 / DSM 30191 / JCM 1249 / CCUG 213 / NBRC 12614 / NCIMB 9131 / NCTC 9757 / MK) protein is Uracil phosphoribosyltransferase.